The primary structure comprises 219 residues: UPF0502 protein Gmet_0262 (219 aa).

Belongs to the UPF0502 family.

The chain is UPF0502 protein Gmet_0262 from Geobacter metallireducens (strain ATCC 53774 / DSM 7210 / GS-15).